Here is a 424-residue protein sequence, read N- to C-terminus: MWDHLKVTDSEVHDLLIGELKRQEYGLELIASENFASVAVMEAMGSILTNKYAEGYPAKRYYGGCEWVDKIEDLARERAKQLFKVKYANVQPHSGSQANMAAYLSIAEPGDVLMGMSLSHGGHLTHGASVNFSGKLFKVIQYGVNPETEMINYDEVRSMALQYKPKIIVAGGSAYSRIIDFKKFREIADEAGAYLVVDMAHFAGLVAAGLYPNPAEYAHIVTSTTHKTLRGPRGGLILTNDAEIYKAVNKTVFPGTQGGPLMHVIAAKAVCFKEAMSSGFVEYQKQVIANAKTLANELSSMGLRIVSGGTDTHLMLVDLTPLNVTGKAAEKALEKCGVTVNKNTIPNETRSPFVASGIRIGTPAVTTRGMREKEMKKIAELIFEVLKNVLDEEGNIPPHIQANVQMAVKKLCEEFPLYVDKIII.

Residues L118 and 122 to 124 contribute to the (6S)-5,6,7,8-tetrahydrofolate site; that span reads GHL. K227 carries the N6-(pyridoxal phosphate)lysine modification. 351–353 is a binding site for (6S)-5,6,7,8-tetrahydrofolate; the sequence is SPF.

Belongs to the SHMT family. In terms of assembly, homodimer. Requires pyridoxal 5'-phosphate as cofactor.

Its subcellular location is the cytoplasm. The enzyme catalyses (6R)-5,10-methylene-5,6,7,8-tetrahydrofolate + glycine + H2O = (6S)-5,6,7,8-tetrahydrofolate + L-serine. Its pathway is one-carbon metabolism; tetrahydrofolate interconversion. It functions in the pathway amino-acid biosynthesis; glycine biosynthesis; glycine from L-serine: step 1/1. Its function is as follows. Catalyzes the reversible interconversion of serine and glycine with tetrahydrofolate (THF) serving as the one-carbon carrier. This reaction serves as the major source of one-carbon groups required for the biosynthesis of purines, thymidylate, methionine, and other important biomolecules. Also exhibits THF-independent aldolase activity toward beta-hydroxyamino acids, producing glycine and aldehydes, via a retro-aldol mechanism. This chain is Serine hydroxymethyltransferase, found in Pseudothermotoga lettingae (strain ATCC BAA-301 / DSM 14385 / NBRC 107922 / TMO) (Thermotoga lettingae).